Here is a 710-residue protein sequence, read N- to C-terminus: Exocyst complex component 5 (710 aa).

A coiled-coil region spans residues 44-96 (DTFIQTIKDLKILQEKQQSKCERLEESLRQEKESHAKKIAKLQERHQTAIDVF).

It belongs to the SEC10 family. As to quaternary structure, the exocyst complex is composed of Sec3/Exoc1, Sec5/Exoc2, Sec6/Exoc3, Sec8/Exoc4, Sec10/Exoc5, Sec15/Exoc6, Exo70/Exoc7 and Exo84/Exoc8.

Functionally, component of the exocyst complex involved in the docking of exocytic vesicles with fusion sites on the plasma membrane. This chain is Exocyst complex component 5, found in Drosophila melanogaster (Fruit fly).